We begin with the raw amino-acid sequence, 843 residues long: Glycogen phosphorylase, brain form (843 aa).

Ala2 carries the post-translational modification N-acetylalanine. Ser15 carries the phosphoserine; by PHK; in form phosphorylase A modification. Positions 43, 197, and 310 each coordinate AMP. Tyr197 bears the Phosphotyrosine mark. Phosphotyrosine is present on Tyr473. Ser524 bears the Phosphoserine mark. Lys569 serves as a coordination point for pyridoxal 5'-phosphate. The tract at residues Thr677–Gly678 is pyridoxal 5'-phosphate. Residue Lys681 is modified to N6-(pyridoxal phosphate)lysine.

Belongs to the glycogen phosphorylase family. As to quaternary structure, homodimer. Dimers associate into a tetramer to form the enzymatically active phosphorylase A. Pyridoxal 5'-phosphate is required as a cofactor. In terms of processing, phosphorylation of Ser-15 converts phosphorylase B (unphosphorylated) to phosphorylase A.

It carries out the reaction [(1-&gt;4)-alpha-D-glucosyl](n) + phosphate = [(1-&gt;4)-alpha-D-glucosyl](n-1) + alpha-D-glucose 1-phosphate. Activity of phosphorylase is controlled both by allosteric means (through the non-covalent binding of metabolites) and by covalent modification. Thus AMP allosterically activates, whereas ATP, ADP, and glucose-6-phosphate allosterically inhibit, phosphorylase B. Glycogen phosphorylase that regulates glycogen mobilization. Phosphorylase is an important allosteric enzyme in carbohydrate metabolism. Enzymes from different sources differ in their regulatory mechanisms and in their natural substrates. However, all known phosphorylases share catalytic and structural properties. In Mus musculus (Mouse), this protein is Glycogen phosphorylase, brain form (Pygb).